The primary structure comprises 622 residues: Chaperone protein HscA homolog (622 aa).

This sequence belongs to the heat shock protein 70 family.

In terms of biological role, chaperone involved in the maturation of iron-sulfur cluster-containing proteins. Has a low intrinsic ATPase activity which is markedly stimulated by HscB. This Burkholderia pseudomallei (strain 668) protein is Chaperone protein HscA homolog.